The primary structure comprises 1676 residues: DNA-directed RNA polymerase subunit beta'-beta'' (1676 aa).

The DNA-directed RNA polymerase subunit beta' stretch occupies residues 1 to 582 (MCDAIQIRLA…FLKTTPGRII (582 aa)). Positions 64, 66, 79, and 82 each coordinate Zn(2+). Mg(2+) contacts are provided by Asp-454, Asp-456, and Asp-458. Residues 583–1676 (FYQQAAYHVG…IPAGTGAKYL (1094 aa)) are DNA-directed RNA polymerase subunit beta''. Zn(2+) is bound by residues Cys-804, Cys-859, Cys-866, and Cys-869.

It in the N-terminal section; belongs to the RNA polymerase beta' chain family. RpoC1 subfamily. This sequence in the C-terminal section; belongs to the RNA polymerase beta' chain family. RpoC2 subfamily. In plastids the minimal PEP RNA polymerase catalytic core is composed of four subunits: alpha, beta, beta', and beta''. When a (nuclear-encoded) sigma factor is associated with the core the holoenzyme is formed, which can initiate transcription. Beta' and beta'' are fused in this algae. The cofactor is Mg(2+). Requires Zn(2+) as cofactor.

It localises to the plastid. It is found in the chloroplast. It catalyses the reaction RNA(n) + a ribonucleoside 5'-triphosphate = RNA(n+1) + diphosphate. Functionally, DNA-dependent RNA polymerase catalyzes the transcription of DNA into RNA using the four ribonucleoside triphosphates as substrates. The chain is DNA-directed RNA polymerase subunit beta'-beta'' from Cyanidioschyzon merolae (strain NIES-3377 / 10D) (Unicellular red alga).